A 2631-amino-acid polypeptide reads, in one-letter code: Cyclic GMP-binding protein C (2631 aa).

6 LRR repeats span residues 170 to 194 (TAQI…IFSL), 196 to 217 (WIQK…IGKL), 218 to 240 (QQLQ…IGDL), 242 to 262 (NLKR…LERL), 263 to 285 (SKLE…IASL), and 287 to 308 (SLKT…VVSK). A Roc domain is found at 323–515 (GARPCLRSKL…QLIEDIIKTQ (193 aa)). GTP is bound by residues 336 to 343 (GDPGVGKT), 402 to 406 (DIANQ), and 458 to 461 (THID). The COR domain maps to 523–741 (PSSFFTLEEA…ESCQKRAVIL (219 aa)). Positions 878 to 1172 (VKINKEVGRG…KKKFAPLPFT (295 aa)) constitute a Protein kinase domain. Residues 884-892 (VGRGAFGIV) and Lys-905 each bind ATP. Asp-1023 (proton acceptor) is an active-site residue. The segment covering 1225-1250 (ISLTSSGTSPTNSPVGGLLSQSLTQP) has biased composition (polar residues). Disordered stretches follow at residues 1225–1263 (ISLT…ILST) and 1387–1418 (SSAT…RNSV). Residues 1251-1263 (ITSGGSTSGILST) are compositionally biased toward low complexity. Residues 1366 to 1539 (SVSIIIAATM…QIYGTLTTHE (174 aa)) enclose the N-terminal Ras-GEF domain. The segment covering 1392–1404 (KSEHISTRRRSDT) has biased composition (basic and acidic residues). The 87-residue stretch at 1620–1706 (PLLGITVKEK…SPTSFYMFLE (87 aa)) folds into the DEP domain. The region spanning 1708 to 1971 (DPELIARQYT…DLKALDSLQI (264 aa)) is the Ras-GEF domain. Positions 1989 to 2013 (GTTNDDKEKGDENGGGLTSSNFFGN) are disordered. 2014-2133 (GSDELTERDW…AKFYKIMANQ (120 aa)) is a binding site for a nucleoside 3',5'-cyclic phosphate. Disordered stretches follow at residues 2142-2180 (PWSK…GGGL), 2192-2239 (MSLS…TTTD), and 2263-2346 (SANL…GQQP). A compositionally biased stretch (low complexity) spans 2144–2174 (SKPKNTTGGSSSSNQSAGPDNILGTTPTGIS). Residues 2212 to 2221 (LPSPPAPLQS) are compositionally biased toward pro residues. Over residues 2222–2238 (PPTSGISSPTTTTSTTT) the composition is skewed to low complexity. Positions 2287 to 2299 (TINKDPHQRDSGS) are enriched in basic and acidic residues. The segment covering 2321-2336 (GSISYLGRTQTSTSPL) has biased composition (polar residues). A GRAM domain is found at 2354-2414 (EFCQRFALVD…KNIDKLICIN (61 aa)). 2490–2616 (GDELTKEDWE…ASKWFKYLAT (127 aa)) is an a nucleoside 3',5'-cyclic phosphate binding site.

This sequence belongs to the protein kinase superfamily. TKL Ser/Thr protein kinase family. ROCO subfamily.

It carries out the reaction L-seryl-[protein] + ATP = O-phospho-L-seryl-[protein] + ADP + H(+). The enzyme catalyses L-threonyl-[protein] + ATP = O-phospho-L-threonyl-[protein] + ADP + H(+). Promotes the exchange of Ras-bound GDP by GTP. Required for cyclic GMP-mediated chemotaxis, polarity. Plays a key role in cyclic AMP-induced myosin II translocation to the cortex. Also involved in the phosphorylation of mlkA and mlcR, either directly or via an intermediate kinase. This chain is Cyclic GMP-binding protein C (gbpC), found in Dictyostelium discoideum (Social amoeba).